We begin with the raw amino-acid sequence, 478 residues long: tRNA(Ile)-lysidine synthase (478 aa).

Position 27–32 (27–32 (SGGSDS)) interacts with ATP.

The protein belongs to the tRNA(Ile)-lysidine synthase family.

The protein localises to the cytoplasm. It carries out the reaction cytidine(34) in tRNA(Ile2) + L-lysine + ATP = lysidine(34) in tRNA(Ile2) + AMP + diphosphate + H(+). Functionally, ligates lysine onto the cytidine present at position 34 of the AUA codon-specific tRNA(Ile) that contains the anticodon CAU, in an ATP-dependent manner. Cytidine is converted to lysidine, thus changing the amino acid specificity of the tRNA from methionine to isoleucine. This chain is tRNA(Ile)-lysidine synthase, found in Rickettsia rickettsii (strain Iowa).